The sequence spans 2120 residues: Alpha-tectorin (2120 aa).

Residues 1-24 (MNTRSLLSAWAALLVVTVRHRAHA) form the signal peptide. Asparagine 34, asparagine 215, asparagine 258, asparagine 277, asparagine 445, and asparagine 496 each carry an N-linked (GlcNAc...) asparagine glycan. An NIDO domain is found at 98–252 (PFCGDVANGI…GRWAFKIDGR (155 aa)). The VWFC domain occupies 260 to 312 (SLRGQFLHQGEIFWENSNCSTKCRCLDFNNEIFCQEMLAPFETVEPKIKFFQC). Positions 317 to 490 (TACVVFGDPH…RVPHPERKCS (174 aa)) constitute a VWFD 1 domain. 2 disulfide bridges follow: cysteine 319-cysteine 451 and cysteine 341-cysteine 489. Residues 578 to 620 (PGHSHYSGCASGCPATCSDLTAPLRCTAPCPEGCECDDGHVLS) enclose the TIL 1 domain. N-linked (GlcNAc...) asparagine glycans are attached at residues asparagine 666, asparagine 792, asparagine 822, asparagine 834, asparagine 877, asparagine 899, asparagine 907, and asparagine 928. The 176-residue stretch at 690 to 865 (GLCSVGQNQV…SWTTFDEICN (176 aa)) folds into the VWFD 2 domain. Cysteine 692 and cysteine 828 form a disulfide bridge. The TIL 2 domain occupies 963 to 1013 (CPENSHFEECMSCVETCETLATGCCMDTCTEGCQCDEGFALRSPCVPRGEC). Residues asparagine 1025, asparagine 1041, asparagine 1207, and asparagine 1337 are each glycosylated (N-linked (GlcNAc...) asparagine). Residues 1066–1250 (ASCIVSGYGH…SWAKRDTFCR (185 aa)) enclose the VWFD 3 domain. 2 cysteine pairs are disulfide-bonded: cysteine 1068–cysteine 1213 and cysteine 1090–cysteine 1249. Positions 1345 to 1398 (CPPNSHYESCVSLCQPRCAAIRLKSDCGHYCVEGCQCDPGYVLNGKSCILPQNC) constitute a TIL 3 domain. In terms of domain architecture, VWFD 4 spans 1458-1633 (SFCLAAGGGV…KTNGMQKSCN (176 aa)). Disulfide bonds link cysteine 1460–cysteine 1594, cysteine 1482–cysteine 1632, cysteine 1684–cysteine 1742, cysteine 1708–cysteine 1751, cysteine 1753–cysteine 1785, cysteine 1773–cysteine 1865, and cysteine 1804–cysteine 1824. N-linked (GlcNAc...) asparagine glycosylation is found at asparagine 1511, asparagine 1537, asparagine 1723, asparagine 1739, asparagine 1761, asparagine 1818, asparagine 1831, asparagine 1847, asparagine 1887, and asparagine 1906. The 255-residue stretch at 1772-2026 (TCKAAQMEVS…YSCKINCPQH (255 aa)) folds into the ZP domain. 3 disulfides stabilise this stretch: cysteine 1947/cysteine 2007, cysteine 1968/cysteine 2023, and cysteine 2012/cysteine 2019. Asparagine 2058 is lipidated: GPI-anchor amidated asparagine. A propeptide spans 2059–2120 (GGCEQICTSQ…LWAALHDPTS (62 aa)) (removed in mature form).

As to quaternary structure, may form homomeric filament after self-association or heteromeric filament after association with beta-tectorin. Post-translationally, at least 3 products of tectorin seem to exist: HMM, MMM and LMM. They may be generated by active processing or the result of proteolysis occurring between intrachain disulfide bonds. The presence of a hydrophobic C-terminus preceded by a potential cleavage site strongly suggests that tectorins are synthesized as glycosylphosphatidylinositol-linked, membrane-bound precursors. Tectorins are targeted to the apical surface of the inner ear epithelia by the lipid and proteolytically released into the extracellular compartment. As to expression, expressed in the inner ear.

The protein resides in the cell membrane. The protein localises to the secreted. It is found in the extracellular space. Its subcellular location is the extracellular matrix. In terms of biological role, one of the major non-collagenous components of the tectorial membrane. The tectorial membrane is an extracellular matrix of the inner ear that covers the neuroepithelium of the cochlea and contacts the stereocilia bundles of specialized sensory hair cells. Sound induces movement of these hair cells relative to the tectorial membrane, deflects the stereocilia and leads to fluctuations in hair-cell membrane potential, transducing sound into electrical signals. The chain is Alpha-tectorin (TECTA) from Gallus gallus (Chicken).